Here is a 263-residue protein sequence, read N- to C-terminus: RNA exonuclease 4 (263 aa).

The interval 1 to 27 (MRLSSNWSKLQDGVTKKAGKKRIDKKP) is disordered. A compositionally biased stretch (basic residues) spans 17-27 (KAGKKRIDKKP). Residues 95–247 (YIAMDCEFVG…EDARATMLIY (153 aa)) form the Exonuclease domain.

Belongs to the REXO4 family.

It is found in the nucleus. Its function is as follows. Exoribonuclease involved in ribosome biosynthesis. Involved in the processing of ITS1, the internal transcribed spacer localized between the 18S and 5.8S rRNAs. The sequence is that of RNA exonuclease 4 (REX4) from Candida glabrata (strain ATCC 2001 / BCRC 20586 / JCM 3761 / NBRC 0622 / NRRL Y-65 / CBS 138) (Yeast).